The following is a 635-amino-acid chain: Biosynthetic arginine decarboxylase (635 aa).

N6-(pyridoxal phosphate)lysine is present on Lys-100. 282–292 lines the substrate pocket; the sequence is VDIGGGLGVDY.

Belongs to the Orn/Lys/Arg decarboxylase class-II family. SpeA subfamily. It depends on Mg(2+) as a cofactor. The cofactor is pyridoxal 5'-phosphate.

It carries out the reaction L-arginine + H(+) = agmatine + CO2. The protein operates within amine and polyamine biosynthesis; agmatine biosynthesis; agmatine from L-arginine: step 1/1. In terms of biological role, catalyzes the biosynthesis of agmatine from arginine. The chain is Biosynthetic arginine decarboxylase from Geotalea daltonii (strain DSM 22248 / JCM 15807 / FRC-32) (Geobacter daltonii).